The sequence spans 459 residues: ERBB receptor feedback inhibitor 1 (459 aa).

N-acetylserine is present on Ser2. Residues Thr126 and Thr130 each carry the phosphothreonine modification. The disordered stretch occupies residues 227–352 (QNRVVPDPNP…VMPPTQSFAP (126 aa)). 2 positions are modified to phosphoserine: Ser250 and Ser271. A compositionally biased stretch (polar residues) spans 264-273 (SSCTHRASPS). A compositionally biased stretch (pro residues) spans 282–291 (PPRVPIPPRP). Ser300 is subject to Phosphoserine. The span at 310–323 (DEDRPPKVPPREPL) shows a compositional bias: basic and acidic residues. Residues 324–335 (SRSNSRTPSPKS) are compositionally biased toward polar residues. The tract at residues 332-361 (SPKSLPSYLNGVMPPTQSFAPDPKYVSSKA) is interaction with EGFR and ERBB2 and regulation of EGFR activation. Position 458 is a phosphoserine (Ser458).

The protein belongs to the MIG6 family. As to quaternary structure, interacts with EGFR and ERBB2.

It is found in the cytoplasm. Its subcellular location is the cell membrane. The protein localises to the nucleus. Functionally, negative regulator of EGFR signaling in skin morphogenesis. Acts as a negative regulator for several EGFR family members, including ERBB2, ERBB3 and ERBB4. Inhibits EGFR catalytic activity by interfering with its dimerization. Inhibits autophosphorylation of EGFR, ERBB2 and ERBB4. Important for normal keratinocyte proliferation and differentiation. Plays a role in modulating the response to steroid hormones in the uterus. Required for normal response to progesterone in the uterus and for fertility. Mediates epithelial estrogen responses in the uterus by regulating ESR1 levels and activation. Important for regulation of endometrium cell proliferation. Important for normal prenatal and perinatal lung development. In Rattus norvegicus (Rat), this protein is ERBB receptor feedback inhibitor 1 (Errfi1).